We begin with the raw amino-acid sequence, 244 residues long: Methylthioribulose-1-phosphate dehydratase (244 aa).

Cys104 lines the substrate pocket. 2 residues coordinate Zn(2+): His122 and His124. Residue Glu148 is the Proton donor/acceptor of the active site. His204 is a Zn(2+) binding site.

It belongs to the aldolase class II family. MtnB subfamily. Requires Zn(2+) as cofactor.

It is found in the cytoplasm. The enzyme catalyses 5-(methylsulfanyl)-D-ribulose 1-phosphate = 5-methylsulfanyl-2,3-dioxopentyl phosphate + H2O. It functions in the pathway amino-acid biosynthesis; L-methionine biosynthesis via salvage pathway; L-methionine from S-methyl-5-thio-alpha-D-ribose 1-phosphate: step 2/6. In terms of biological role, catalyzes the dehydration of methylthioribulose-1-phosphate (MTRu-1-P) into 2,3-diketo-5-methylthiopentyl-1-phosphate (DK-MTP-1-P). This chain is Methylthioribulose-1-phosphate dehydratase, found in Cryptococcus neoformans var. neoformans serotype D (strain B-3501A) (Filobasidiella neoformans).